Reading from the N-terminus, the 1166-residue chain is ATP-dependent helicase/deoxyribonuclease subunit B (1166 aa).

Residues 1-285 (MGAVFLSGRS…VRLEETKRHR (285 aa)) form the UvrD-like helicase ATP-binding domain. 8-15 (GRSGSGKT) contributes to the ATP binding site. The UvrD-like helicase C-terminal domain maps to 279–586 (EETKRHRHHP…KFALIPPALD (308 aa)). Residues Cys801, Cys1121, Cys1124, and Cys1130 each contribute to the [4Fe-4S] cluster site.

It belongs to the helicase family. AddB/RexB type 1 subfamily. Heterodimer of AddA and AddB. The cofactor is Mg(2+). Requires [4Fe-4S] cluster as cofactor.

In terms of biological role, the heterodimer acts as both an ATP-dependent DNA helicase and an ATP-dependent, dual-direction single-stranded exonuclease. Recognizes the chi site generating a DNA molecule suitable for the initiation of homologous recombination. The AddB subunit has 5' -&gt; 3' nuclease activity but not helicase activity. This Bacillus licheniformis (strain ATCC 14580 / DSM 13 / JCM 2505 / CCUG 7422 / NBRC 12200 / NCIMB 9375 / NCTC 10341 / NRRL NRS-1264 / Gibson 46) protein is ATP-dependent helicase/deoxyribonuclease subunit B.